Reading from the N-terminus, the 137-residue chain is uncharacterized protein (137 aa).

Positions 4–73 (MLTVSEVARK…LEEIADILHL (70 aa)) constitute an HTH merR-type domain. The segment at residues 8–27 (SEVARKLGLNPQTLYFYERI) is a DNA-binding region (H-T-H motif).

This is an uncharacterized protein from Synechocystis sp. (strain ATCC 27184 / PCC 6803 / Kazusa).